Consider the following 71-residue polypeptide: Ceratotoxin-D (71 aa).

The first 23 residues, 1-23, serve as a signal peptide directing secretion; sequence MANLKAVFLICILAFIAFHCVVG. Residues 24–35 constitute a propeptide that is removed on maturation; it reads APTAEDSIVVKR.

In terms of assembly, homomer of four to six subunits.

Its subcellular location is the secreted. Its function is as follows. Female-specific peptides with potent activity against Gram-positive and Gram-negative bacteria. They have as well hemolytic activity. In Ceratitis capitata (Mediterranean fruit fly), this protein is Ceratotoxin-D (CTXD).